Here is a 110-residue protein sequence, read N- to C-terminus: Acylphosphatase (110 aa).

In terms of domain architecture, Acylphosphatase-like spans 24-110; that stretch reads RVRVYVSGRV…SGGARGFEVR (87 aa). Catalysis depends on residues arginine 39 and asparagine 57.

It belongs to the acylphosphatase family.

The enzyme catalyses an acyl phosphate + H2O = a carboxylate + phosphate + H(+). The sequence is that of Acylphosphatase (acyP) from Rubrobacter xylanophilus (strain DSM 9941 / JCM 11954 / NBRC 16129 / PRD-1).